A 259-amino-acid chain; its full sequence is F-box/kelch-repeat protein At2g22050 (259 aa).

A compositionally biased stretch (basic residues) spans 1 to 12 (MSPSSKKFKKQS). Residues 1–29 (MSPSSKKFKKQSSSKSVKPPLEDNDPSLP) form a disordered region. Positions 28 to 76 (LPSFTSLPDEIVLDCLQRVPRSYYLNLCRVSKTLRSLVRSPELSRLRTL) constitute an F-box domain. Residues 142-186 (EIYFVGGSFEPMSELWILDTRTGMFRQGPSMKVARTDEASVGVIN) form a Kelch repeat.

In Arabidopsis thaliana (Mouse-ear cress), this protein is F-box/kelch-repeat protein At2g22050.